We begin with the raw amino-acid sequence, 293 residues long: Small ribosomal subunit biogenesis GTPase RsgA (293 aa).

A CP-type G domain is found at 63 to 223; that stretch reads KNELVRPPIA…VADTPGFSSL (161 aa). GTP is bound by residues 112–115 and 166–174; these read SKMD and GQSGVGKSS. C247, C252, H254, and C260 together coordinate Zn(2+).

This sequence belongs to the TRAFAC class YlqF/YawG GTPase family. RsgA subfamily. Monomer. Associates with 30S ribosomal subunit, binds 16S rRNA. Zn(2+) serves as cofactor.

It localises to the cytoplasm. In terms of biological role, one of several proteins that assist in the late maturation steps of the functional core of the 30S ribosomal subunit. Helps release RbfA from mature subunits. May play a role in the assembly of ribosomal proteins into the subunit. Circularly permuted GTPase that catalyzes slow GTP hydrolysis, GTPase activity is stimulated by the 30S ribosomal subunit. This is Small ribosomal subunit biogenesis GTPase RsgA from Bacillus cereus (strain ATCC 14579 / DSM 31 / CCUG 7414 / JCM 2152 / NBRC 15305 / NCIMB 9373 / NCTC 2599 / NRRL B-3711).